Reading from the N-terminus, the 275-residue chain is Polyamine aminopropyltransferase (275 aa).

The PABS domain occupies 2-235; the sequence is ELWFTEKQTK…GLWTFTIGSK (234 aa). Gln31 lines the S-methyl-5'-thioadenosine pocket. Spermidine-binding residues include His62 and Asp86. S-methyl-5'-thioadenosine-binding positions include Glu106 and 137–138; that span reads DG. Residue Asp155 is the Proton acceptor of the active site. 155–158 provides a ligand contact to spermidine; sequence DSTE. Pro162 contributes to the S-methyl-5'-thioadenosine binding site.

This sequence belongs to the spermidine/spermine synthase family. Homodimer or homotetramer.

It localises to the cytoplasm. It catalyses the reaction S-adenosyl 3-(methylsulfanyl)propylamine + putrescine = S-methyl-5'-thioadenosine + spermidine + H(+). It functions in the pathway amine and polyamine biosynthesis; spermidine biosynthesis; spermidine from putrescine: step 1/1. In terms of biological role, catalyzes the irreversible transfer of a propylamine group from the amino donor S-adenosylmethioninamine (decarboxy-AdoMet) to putrescine (1,4-diaminobutane) to yield spermidine. The chain is Polyamine aminopropyltransferase from Bacillus cereus (strain ATCC 10987 / NRS 248).